The following is a 213-amino-acid chain: Ripening-related protein 3 (213 aa).

Residues 1-32 form the signal peptide; that stretch reads MAGAMTMSRRRLSHALLLVLAILPNLAALAVA.

It belongs to the kiwellin family.

Its subcellular location is the secreted. This is Ripening-related protein 3 from Oryza sativa subsp. japonica (Rice).